Reading from the N-terminus, the 130-residue chain is MASVKLASLIVLFATLGMFLTKNVGAASCNGVCSPFEMPPCGTSACRCIPVGLVIGYCRNPSGVFLRTNDEHPNLCESDADCRKKGSGKFCGHYPNPGIEYGWCFASKSEAEDFFSKITQKDLLKSVSTA.

Positions 1–26 are cleaved as a signal peptide; the sequence is MASVKLASLIVLFATLGMFLTKNVGA. 3 disulfide bridges follow: Cys-29-Cys-46, Cys-33-Cys-48, and Cys-41-Cys-58. 2 propeptides span residues 64–69 and 123–130; these read VFLRTN and LLKSVSTA.

Post-translationally, the C-terminal glycine may be removed from PA1b.

Functionally, PA1b binds to basic 7S globulin (BG) and stimulates its phosphorylation activity. Involved in the signal transduction system to regulate the growth and differentiation as a hormone peptide. Toxic to various insects through binding to a high affinity binding site in the insect gut. The sequence is that of Albumin-1 F from Pisum sativum (Garden pea).